Here is a 673-residue protein sequence, read N- to C-terminus: Exoribonuclease 2 (673 aa).

Residues 191 to 516 (RTDLTATPFF…NHRLLKAVIA (326 aa)) form the RNB domain. In terms of domain architecture, S1 motif spans 562–645 (DKVFNAEIID…ETRSLIAKPA (84 aa)). Positions 650 to 673 (PGPAPVAPTSEADATPADEAPKAE) are disordered.

The protein belongs to the RNR ribonuclease family. RNase II subfamily.

Its subcellular location is the cytoplasm. It carries out the reaction Exonucleolytic cleavage in the 3'- to 5'-direction to yield nucleoside 5'-phosphates.. Involved in mRNA degradation. Hydrolyzes single-stranded polyribonucleotides processively in the 3' to 5' direction. This chain is Exoribonuclease 2, found in Aeromonas hydrophila subsp. hydrophila (strain ATCC 7966 / DSM 30187 / BCRC 13018 / CCUG 14551 / JCM 1027 / KCTC 2358 / NCIMB 9240 / NCTC 8049).